The primary structure comprises 444 residues: Tubulin beta-8 chain (444 aa).

Positions 1–4 (MREI) match the MREI motif motif. GTP is bound by residues Gln-11, Glu-69, Ser-138, Gly-142, Thr-143, and Gly-144. Glu-69 is a Mg(2+) binding site. At Ser-172 the chain carries Phosphoserine; by CDK1. GTP-binding residues include Asn-204 and Asn-226. A disordered region spans residues 423 to 444 (QQYQDATAEEEEDEEYAEEEVA). The segment covering 429–444 (TAEEEEDEEYAEEEVA) has biased composition (acidic residues). At Glu-436 the chain carries 5-glutamyl polyglutamate.

This sequence belongs to the tubulin family. As to quaternary structure, dimer of alpha and beta chains. A typical microtubule is a hollow water-filled tube with an outer diameter of 25 nm and an inner diameter of 15 nM. Alpha-beta heterodimers associate head-to-tail to form protofilaments running lengthwise along the microtubule wall with the beta-tubulin subunit facing the microtubule plus end conferring a structural polarity. Microtubules usually have 13 protofilaments but different protofilament numbers can be found in some organisms and specialized cells. Requires Mg(2+) as cofactor. Post-translationally, some glutamate residues at the C-terminus are polyglycylated, resulting in polyglycine chains on the gamma-carboxyl group. Glycylation is mainly limited to tubulin incorporated into axonemes (cilia and flagella) whereas glutamylation is prevalent in neuronal cells, centrioles, axonemes, and the mitotic spindle. Both modifications can coexist on the same protein on adjacent residues, and lowering polyglycylation levels increases polyglutamylation, and reciprocally. Cilia and flagella glycylation is required for their stability and maintenance. Flagella glycylation controls sperm motility. In terms of processing, some glutamate residues at the C-terminus are polyglutamylated, resulting in polyglutamate chains on the gamma-carboxyl group. Polyglutamylation plays a key role in microtubule severing by spastin (SPAST). SPAST preferentially recognizes and acts on microtubules decorated with short polyglutamate tails: severing activity by SPAST increases as the number of glutamates per tubulin rises from one to eight, but decreases beyond this glutamylation threshold. Glutamylation is also involved in cilia motility. Phosphorylated on Ser-172 by CDK1 during the cell cycle, from metaphase to telophase, but not in interphase. This phosphorylation inhibits tubulin incorporation into microtubules.

It is found in the cytoplasm. The protein resides in the cytoskeleton. Its subcellular location is the spindle. In terms of biological role, tubulin is the major constituent of microtubules, a cylinder consisting of laterally associated linear protofilaments composed of alpha- and beta-tubulin heterodimers. Microtubules grow by the addition of GTP-tubulin dimers to the microtubule end, where a stabilizing cap forms. Below the cap, tubulin dimers are in GDP-bound state, owing to GTPase activity of alpha-tubulin. Has a key role in meiotic spindle assembly and oocyte maturation. The chain is Tubulin beta-8 chain (TUBB8) from Pan troglodytes (Chimpanzee).